A 769-amino-acid polypeptide reads, in one-letter code: 5-methyltetrahydropteroyltriglutamate--homocysteine methyltransferase (769 aa).

Residues 18-21 and lysine 127 each bind 5-methyltetrahydropteroyltri-L-glutamate; that span reads RELK. Residues 447–449 and glutamate 500 contribute to the L-homocysteine site; that span reads IGS. L-methionine contacts are provided by residues 447–449 and glutamate 500; that span reads IGS. 5-methyltetrahydropteroyltri-L-glutamate-binding positions include 531–532 and tryptophan 577; that span reads RC. Residue aspartate 615 coordinates L-homocysteine. An L-methionine-binding site is contributed by aspartate 615. Glutamate 621 contributes to the 5-methyltetrahydropteroyltri-L-glutamate binding site. The Zn(2+) site is built by histidine 657, cysteine 659, and glutamate 681. The active-site Proton donor is histidine 710. Cysteine 742 contributes to the Zn(2+) binding site.

It belongs to the vitamin-B12 independent methionine synthase family. Requires Zn(2+) as cofactor.

It catalyses the reaction 5-methyltetrahydropteroyltri-L-glutamate + L-homocysteine = tetrahydropteroyltri-L-glutamate + L-methionine. It functions in the pathway amino-acid biosynthesis; L-methionine biosynthesis via de novo pathway; L-methionine from L-homocysteine (MetE route): step 1/1. Its function is as follows. Catalyzes the transfer of a methyl group from 5-methyltetrahydrofolate to homocysteine resulting in methionine formation. The sequence is that of 5-methyltetrahydropteroyltriglutamate--homocysteine methyltransferase from Chelativorans sp. (strain BNC1).